We begin with the raw amino-acid sequence, 392 residues long: NADH-quinone oxidoreductase subunit D (392 aa).

Belongs to the complex I 49 kDa subunit family. NDH-1 is composed of 14 different subunits. Subunits NuoB, C, D, E, F, and G constitute the peripheral sector of the complex.

It localises to the cell inner membrane. It carries out the reaction a quinone + NADH + 5 H(+)(in) = a quinol + NAD(+) + 4 H(+)(out). Its function is as follows. NDH-1 shuttles electrons from NADH, via FMN and iron-sulfur (Fe-S) centers, to quinones in the respiratory chain. The immediate electron acceptor for the enzyme in this species is believed to be ubiquinone. Couples the redox reaction to proton translocation (for every two electrons transferred, four hydrogen ions are translocated across the cytoplasmic membrane), and thus conserves the redox energy in a proton gradient. The chain is NADH-quinone oxidoreductase subunit D from Parvibaculum lavamentivorans (strain DS-1 / DSM 13023 / NCIMB 13966).